Consider the following 524-residue polypeptide: MGALSSRVLRPAGRTEQPEPTPGAGGAARRSDAGEDAGHSFCYCPGGRKRKRSSGTFCYCHPDSETDDDEDEGDEQQRLLNTPRRKKLKSTSKYIYQTLFLNGENSDIKICALGEEWSLHKIYLCQSGYFSSMFSGSWKESSMNIIELEIPDQNIDIEALQVAFGSLYRDDVLIKPSRVVAILAAACMLQLDGLIQQCGETMKETISVRTVCGYYTSAGTYGLDSVKKKCLEWLLNNLMTHQSVELFKELSINVMKQLIGSSNLFVMQVEMDVYTALKKWMFLQLVPSWNGSLKQLLTETDVWFSKWKKDFEGTTFLETEQGKPFAPVFRHLRLQYIISDLASARIIEQDSLVPSEWLAAVYKQQWLAMLRAEQDSEVGPQEINKEELEGNSMRCGRKLAKDGEYCWRWTGFNFGFDLLVTYTNRYIIFKRNTLNQPCSGSVSLQPRRSIAFRLRLASFDSSGKLICSRATGYQILTLEKDQEQVVMNLDSRLLIFPLYICCNFLYISPEKRTESNRHPENPGH.

Positions Met-1–Ala-37 are disordered. The Nuclear localization signal motif lies at Gly-47 to Ser-53. Residues Asp-63–Pro-83 are disordered. At Ser-64 the chain carries Phosphoserine. The span at Glu-65–Asp-74 shows a compositional bias: acidic residues. The residue at position 66 (Thr-66) is a Phosphothreonine. The Nuclear localization signal signature appears at Pro-83–Lys-89. Positions Ser-106 to Pro-176 constitute a BTB domain.

In terms of assembly, interacts with TMPO-Beta, TSG101 and TFDP2. Interacts with EMD. Ubiquitously expressed at low levels throughout development and in adult tissues.

It localises to the nucleus matrix. In terms of biological role, possible function in spermatogenesis. Enhances the degradation of MDM2 and increases the amount of p53 probably by modulating the nucleocytoplasmic transport. The polypeptide is Germ cell-less protein-like 1 (Gmcl1) (Mus musculus (Mouse)).